A 62-amino-acid polypeptide reads, in one-letter code: MAKLQVTLTRSVIGRPETQRKTVEALGLKKTNSSVVLEDNVANRGQINKVSHLVTVEEVDAK.

The protein belongs to the universal ribosomal protein uL30 family. In terms of assembly, part of the 50S ribosomal subunit.

The protein is Large ribosomal subunit protein uL30 of Staphylococcus carnosus (strain TM300).